Consider the following 430-residue polypeptide: MGKNVVVLGTQWGDEGKGKIVDLLTEQAAAVVRYQGGHNAGHTLVIDGEKTVLHLIPSGILREGVQCLIGNGVVLAPDALLREITKLEEKGVPVRERLRISPSCPLILSYHVALDQAREKARGEAKIGTTGRGIGPAYEDKVARRGLRVGDLFHRERFAAKLGELLDYHNFVLQHYYKEPAIDFQKTLDEAMEYAELLKPMMADVAATLHDLRKHGKDIMFEGAQGSLLDIDHGTYPYVTSSNTTAGGTATGSGFGPLYLDYVLGITKAYTTRVGSGPFPTELFDDVGAYLAKRGHEFGATTGRARRCGWFDAVILRRAIEINSISGLCLTKLDVLDGLDVVRLCVGYKNADGDVLEAPTDADSYIGLQPVYEEMPGWSESTVGAKTLEELPANARAYIKRVEELVGAPIDIISTGPDRNETIILRHPFA.

Residues 13–19 (GDEGKGK) and 41–43 (GHT) contribute to the GTP site. Residue Asp-14 is the Proton acceptor of the active site. Residues Asp-14 and Gly-41 each contribute to the Mg(2+) site. IMP-binding positions include 14–17 (DEGK), 39–42 (NAGH), Thr-130, Arg-144, Gln-225, Thr-240, and Arg-304. His-42 acts as the Proton donor in catalysis. A substrate-binding site is contributed by 300 to 306 (ATTGRAR). GTP is bound by residues Arg-306, 332 to 334 (KLD), and 414 to 416 (STG).

It belongs to the adenylosuccinate synthetase family. Homodimer. The cofactor is Mg(2+).

The protein localises to the cytoplasm. The enzyme catalyses IMP + L-aspartate + GTP = N(6)-(1,2-dicarboxyethyl)-AMP + GDP + phosphate + 2 H(+). It functions in the pathway purine metabolism; AMP biosynthesis via de novo pathway; AMP from IMP: step 1/2. Plays an important role in the de novo pathway of purine nucleotide biosynthesis. Catalyzes the first committed step in the biosynthesis of AMP from IMP. The polypeptide is Adenylosuccinate synthetase (Pseudomonas aeruginosa (strain LESB58)).